The sequence spans 505 residues: Alpha-ketoglutarate-dependent dioxygenase FTO (505 aa).

Position 4 is a phosphothreonine (T4). A fe2OG dioxygenase domain region spans residues 32–327 (TPKDDEFYQQ…SSTHRVAECS (296 aa)). Positions 96 and 108 each coordinate substrate. N205 contacts 2-oxoglutarate. The interval 213 to 224 (PYLKEEPYFGMG) is loop L1; predicted to block binding of double-stranded DNA or RNA. K216 is modified (N6-acetyllysine). Fe cation contacts are provided by H231 and D233. 231–234 (HHDE) lines the substrate pocket. Residue Y295 participates in 2-oxoglutarate binding. H307 serves as a coordination point for Fe cation. Residues 316-318 (RFS), T320, and R322 each bind 2-oxoglutarate.

The protein belongs to the fto family. In terms of assembly, monomer. May also exist as homodimer. Fe(2+) is required as a cofactor.

The protein localises to the nucleus. It is found in the nucleus speckle. The protein resides in the cytoplasm. It carries out the reaction a 5'-end (N(7)-methyl 5'-triphosphoguanosine)-(N(6),2'-O-dimethyladenosine) in mRNA + 2-oxoglutarate + O2 = a 5'-end (N(7)-methyl 5'-triphosphoguanosine)-(2'-O-methyladenosine) in mRNA + formaldehyde + succinate + CO2. It catalyses the reaction an N(6)-methyladenosine in mRNA + 2-oxoglutarate + O2 = an adenosine in mRNA + formaldehyde + succinate + CO2. The catalysed reaction is N(6)-methyladenosine in U6 snRNA + 2-oxoglutarate + O2 = adenosine in U6 snRNA + formaldehyde + succinate + CO2. The enzyme catalyses a 5'-end (N(7)-methyl 5'-triphosphoguanosine)-(N(6),2'-O-dimethyladenosine) in U6 snRNA + 2-oxoglutarate + O2 = a 5'-end (N(7)-methyl 5'-triphosphoguanosine)-(2'-O-methyladenosine) in U6 snRNA + formaldehyde + succinate + CO2. It carries out the reaction an N(1)-methyladenosine in tRNA + 2-oxoglutarate + O2 = an adenosine in tRNA + formaldehyde + succinate + CO2. With respect to regulation, activated by ascorbate. Inhibited by N-oxalylglycine, fumarate and succinate. Its function is as follows. RNA demethylase that mediates oxidative demethylation of different RNA species, such as mRNAs, tRNAs and snRNAs, and acts as a regulator of fat mass, adipogenesis and energy homeostasis. Specifically demethylates N(6)-methyladenosine (m6A) RNA, the most prevalent internal modification of messenger RNA (mRNA) in higher eukaryotes. M6A demethylation by FTO affects mRNA expression and stability. Also able to demethylate m6A in U6 small nuclear RNA (snRNA). Mediates demethylation of N(6),2'-O-dimethyladenosine cap (m6A(m)), by demethylating the N(6)-methyladenosine at the second transcribed position of mRNAs and U6 snRNA. Demethylation of m6A(m) in the 5'-cap by FTO affects mRNA stability by promoting susceptibility to decapping. Also acts as a tRNA demethylase by removing N(1)-methyladenine from various tRNAs. Has no activity towards 1-methylguanine. Has no detectable activity towards double-stranded DNA. Also able to repair alkylated DNA and RNA by oxidative demethylation: demethylates single-stranded RNA containing 3-methyluracil, single-stranded DNA containing 3-methylthymine and has low demethylase activity towards single-stranded DNA containing 1-methyladenine or 3-methylcytosine. Ability to repair alkylated DNA and RNA is however unsure in vivo. Involved in the regulation of fat mass, adipogenesis and body weight, thereby contributing to the regulation of body size and body fat accumulation. Involved in the regulation of thermogenesis and the control of adipocyte differentiation into brown or white fat cells. Regulates activity of the dopaminergic midbrain circuitry via its ability to demethylate m6A in mRNAs. This chain is Alpha-ketoglutarate-dependent dioxygenase FTO, found in Pongo abelii (Sumatran orangutan).